Reading from the N-terminus, the 352-residue chain is C-C chemokine receptor type 5 (352 aa).

Topologically, residues 1-30 (MDYQVSSPTYDIDYYTSEPCQKVNVKQIAA) are extracellular. A Sulfotyrosine modification is found at Tyr-3. Residues Ser-6 and Ser-7 are each glycosylated (O-linked (GalNAc...) serine). Tyr-10, Tyr-14, and Tyr-15 each carry sulfotyrosine. Intrachain disulfides connect Cys-20-Cys-269 and Cys-101-Cys-178. The chain crosses the membrane as a helical span at residues 31–58 (RLLPPLYSLVFIFGFVGNILVVLILINC). Residues 59–68 (KRLKSMTDIY) are Cytoplasmic-facing. Residues 69-89 (LLNLAISDLFFLLTVPFWAHY) traverse the membrane as a helical segment. Residues 90 to 102 (AAAQWDFGNTMCQ) lie on the Extracellular side of the membrane. The helical transmembrane segment at 103–124 (LLTGLYFIGFFSGIFFIILLTI) threads the bilayer. Residues 125–141 (DRYLAIVHAVFALKART) are Cytoplasmic-facing. Residues 142-166 (VTFGVVTSVITWVVAVFASLPGIIF) form a helical membrane-spanning segment. Residues 167–198 (TRSQREGLHYTCSSHFPYSQYQFWKNFQTLKI) lie on the Extracellular side of the membrane. Residues 199-218 (VILGLVLPLLVMVICYSGIL) traverse the membrane as a helical segment. Residues 219 to 235 (KTLLRCRNEKKRHRAVR) are Cytoplasmic-facing. A helical membrane pass occupies residues 236 to 260 (LIFTIMIVYFLFWAPYNIVLLLNTF). At 261 to 277 (QEFFGLNNCSSSNRLDQ) the chain is on the extracellular side. Residues 278–301 (AMQVTETLGMTHCCINPIIYAFVG) traverse the membrane as a helical segment. The Cytoplasmic portion of the chain corresponds to 302–352 (EKFRNYLLVFFQKHIAKRFCKCCSIFQQEAPERASSVYTRSTGEQETSVGL). 3 S-palmitoyl cysteine lipidation sites follow: Cys-321, Cys-323, and Cys-324. A phosphoserine; by BARK1 mark is found at Ser-336, Ser-337, Ser-342, and Ser-349.

It belongs to the G-protein coupled receptor 1 family. As to quaternary structure, interacts with PRAF2. Efficient ligand binding to CCL3/MIP-1alpha and CCL4/MIP-1beta requires sulfation, O-glycosylation and sialic acid modifications. Glycosylation on Ser-6 is required for efficient binding of CCL4. Interacts with GRK2. Interacts with ARRB1 and ARRB2. Interacts with CNIH4. Interacts with S100A4; this interaction stimulates T-lymphocyte chemotaxis. In terms of processing, sulfated on at least 2 of the N-terminal tyrosines. Sulfation is required for efficient binding of the chemokines, CCL3 and CCL4. Post-translationally, palmitoylation in the C-terminal is important for cell surface expression. Phosphorylation on serine residues in the C-terminal is stimulated by binding CC chemokines especially by APO-RANTES. In terms of processing, O-glycosylated, but not N-glycosylated. Ser-6 appears to be the major site even if Ser-7 may be also O-glycosylated. Also sialylated glycans present which contribute to chemokine binding. Thr-16 and Ser-17 may also be glycosylated and, if so, with small moieties such as a T-antigen.

It is found in the cell membrane. Receptor for a number of inflammatory CC-chemokines including CCL3/MIP-1-alpha, CCL4/MIP-1-beta and RANTES and subsequently transduces a signal by increasing the intracellular calcium ion level. May play a role in the control of granulocytic lineage proliferation or differentiation. Participates in T-lymphocyte migration to the infection site by acting as a chemotactic receptor. This chain is C-C chemokine receptor type 5 (CCR5), found in Trachypithecus francoisi (Francois' leaf monkey).